Reading from the N-terminus, the 140-residue chain is Nucleoside diphosphate kinase (140 aa).

ATP is bound by residues Lys9, Phe57, Arg85, Thr91, Arg102, and Asn112. The active-site Pros-phosphohistidine intermediate is the His115.

This sequence belongs to the NDK family. Homotetramer. Requires Mg(2+) as cofactor.

It is found in the cytoplasm. It carries out the reaction a 2'-deoxyribonucleoside 5'-diphosphate + ATP = a 2'-deoxyribonucleoside 5'-triphosphate + ADP. It catalyses the reaction a ribonucleoside 5'-diphosphate + ATP = a ribonucleoside 5'-triphosphate + ADP. Functionally, major role in the synthesis of nucleoside triphosphates other than ATP. The ATP gamma phosphate is transferred to the NDP beta phosphate via a ping-pong mechanism, using a phosphorylated active-site intermediate. The polypeptide is Nucleoside diphosphate kinase (Chlorobium chlorochromatii (strain CaD3)).